Reading from the N-terminus, the 133-residue chain is ATP synthase epsilon chain, chloroplastic (133 aa).

It belongs to the ATPase epsilon chain family. F-type ATPases have 2 components, CF(1) - the catalytic core - and CF(0) - the membrane proton channel. CF(1) has five subunits: alpha(3), beta(3), gamma(1), delta(1), epsilon(1). CF(0) has three main subunits: a, b and c.

It is found in the plastid. The protein localises to the chloroplast thylakoid membrane. Its function is as follows. Produces ATP from ADP in the presence of a proton gradient across the membrane. This is ATP synthase epsilon chain, chloroplastic from Nephroselmis olivacea (Green alga).